The primary structure comprises 478 residues: Protein nucleotidyltransferase YdiU (478 aa).

The ATP site is built by G74, G76, R77, K97, D109, G110, R160, and R167. Catalysis depends on D236, which acts as the Proton acceptor. The Mg(2+) site is built by N237 and D246. Position 246 (D246) interacts with ATP.

Belongs to the SELO family. Requires Mg(2+) as cofactor. It depends on Mn(2+) as a cofactor.

It catalyses the reaction L-seryl-[protein] + ATP = 3-O-(5'-adenylyl)-L-seryl-[protein] + diphosphate. The enzyme catalyses L-threonyl-[protein] + ATP = 3-O-(5'-adenylyl)-L-threonyl-[protein] + diphosphate. The catalysed reaction is L-tyrosyl-[protein] + ATP = O-(5'-adenylyl)-L-tyrosyl-[protein] + diphosphate. It carries out the reaction L-histidyl-[protein] + UTP = N(tele)-(5'-uridylyl)-L-histidyl-[protein] + diphosphate. It catalyses the reaction L-seryl-[protein] + UTP = O-(5'-uridylyl)-L-seryl-[protein] + diphosphate. The enzyme catalyses L-tyrosyl-[protein] + UTP = O-(5'-uridylyl)-L-tyrosyl-[protein] + diphosphate. Nucleotidyltransferase involved in the post-translational modification of proteins. It can catalyze the addition of adenosine monophosphate (AMP) or uridine monophosphate (UMP) to a protein, resulting in modifications known as AMPylation and UMPylation. The sequence is that of Protein nucleotidyltransferase YdiU from Chromobacterium violaceum (strain ATCC 12472 / DSM 30191 / JCM 1249 / CCUG 213 / NBRC 12614 / NCIMB 9131 / NCTC 9757 / MK).